The chain runs to 130 residues: Protein ApaG (130 aa).

Positions 3 to 127 (SAVTQDIQIT…FSLDSPFVRR (125 aa)) constitute an ApaG domain.

This Methylocella silvestris (strain DSM 15510 / CIP 108128 / LMG 27833 / NCIMB 13906 / BL2) protein is Protein ApaG.